Consider the following 359-residue polypeptide: Photosystem II protein D1 1 (359 aa).

3 helical membrane passes run 29–46 (YVGW…AATT), 118–133 (HFLI…EWEL), and 142–156 (WICI…AASA). Chlorophyll a is bound at residue His-118. Tyr-126 provides a ligand contact to pheophytin a. Residues Asp-170 and Glu-189 each coordinate [CaMn4O5] cluster. The chain crosses the membrane as a helical span at residues 197–218 (FHMLGVAGVFGGSLFSAMHGSL). His-198 is a binding site for chlorophyll a. A quinone is bound by residues His-215 and 264 to 265 (SF). Residue His-215 participates in Fe cation binding. His-272 provides a ligand contact to Fe cation. Residues 274 to 288 (FLAAWPVVGIWFTAL) form a helical membrane-spanning segment. 4 residues coordinate [CaMn4O5] cluster: His-332, Glu-333, Asp-342, and Ala-344. A propeptide spanning residues 345-359 (AAESAPVALQAPAIG) is cleaved from the precursor.

This sequence belongs to the reaction center PufL/M/PsbA/D family. In terms of assembly, PSII is composed of 1 copy each of membrane proteins PsbA, PsbB, PsbC, PsbD, PsbE, PsbF, PsbH, PsbI, PsbJ, PsbK, PsbL, PsbM, PsbT, PsbX, PsbY, PsbZ, Psb30/Ycf12, peripheral proteins PsbO, CyanoQ (PsbQ), PsbU, PsbV and a large number of cofactors. It forms dimeric complexes. The cofactor is The D1/D2 heterodimer binds P680, chlorophylls that are the primary electron donor of PSII, and subsequent electron acceptors. It shares a non-heme iron and each subunit binds pheophytin, quinone, additional chlorophylls, carotenoids and lipids. D1 provides most of the ligands for the Mn4-Ca-O5 cluster of the oxygen-evolving complex (OEC). There is also a Cl(-1) ion associated with D1 and D2, which is required for oxygen evolution. The PSII complex binds additional chlorophylls, carotenoids and specific lipids.. Tyr-161 forms a radical intermediate that is referred to as redox-active TyrZ, YZ or Y-Z. Post-translationally, C-terminally processed by CtpA; processing is essential to allow assembly of the oxygen-evolving complex and thus photosynthetic growth.

The protein localises to the cellular thylakoid membrane. It carries out the reaction 2 a plastoquinone + 4 hnu + 2 H2O = 2 a plastoquinol + O2. Photosystem II (PSII) is a light-driven water:plastoquinone oxidoreductase that uses light energy to abstract electrons from H(2)O, generating O(2) and a proton gradient subsequently used for ATP formation. It consists of a core antenna complex that captures photons, and an electron transfer chain that converts photonic excitation into a charge separation. The D1/D2 (PsbA/PsbD) reaction center heterodimer binds P680, the primary electron donor of PSII as well as several subsequent electron acceptors. This is Photosystem II protein D1 1 from Synechococcus sp. (strain RCC307).